Consider the following 390-residue polypeptide: UPF0229 protein ABC1477 (390 aa).

Disordered regions lie at residues 1–31 (MEKD…RHQE) and 81–118 (VGQG…QAGE). Over residues 7-16 (RQFTISQENW) the composition is skewed to polar residues. Composition is skewed to basic and acidic residues over residues 22 to 31 (GFQDQRRHQE) and 86 to 100 (GDSK…DPNG).

This sequence belongs to the UPF0229 family.

The sequence is that of UPF0229 protein ABC1477 from Shouchella clausii (strain KSM-K16) (Alkalihalobacillus clausii).